The sequence spans 478 residues: 3-isopropylmalate dehydratase large subunit (478 aa).

Cysteine 355, cysteine 415, and cysteine 418 together coordinate [4Fe-4S] cluster.

It belongs to the aconitase/IPM isomerase family. LeuC type 1 subfamily. In terms of assembly, heterodimer of LeuC and LeuD. [4Fe-4S] cluster is required as a cofactor.

It carries out the reaction (2R,3S)-3-isopropylmalate = (2S)-2-isopropylmalate. The protein operates within amino-acid biosynthesis; L-leucine biosynthesis; L-leucine from 3-methyl-2-oxobutanoate: step 2/4. Functionally, catalyzes the isomerization between 2-isopropylmalate and 3-isopropylmalate, via the formation of 2-isopropylmaleate. This chain is 3-isopropylmalate dehydratase large subunit, found in Paracoccus denitrificans (strain Pd 1222).